A 422-amino-acid chain; its full sequence is Putative serpin-Z8 (422 aa).

The segment at 369 to 393 is RCL; the sequence is GTVAAAATMTRMLPSGVPPPPVDFV.

Belongs to the serpin family.

Functionally, probable serine protease inhibitor. In Oryza sativa subsp. japonica (Rice), this protein is Putative serpin-Z8.